The chain runs to 376 residues: Cytochrome c oxidase subunit 2, mitochondrial (376 aa).

Residues 164-184 (IFFFLVQILVFVLWVLSRALW) traverse the membrane as a helical segment. Residues 185 to 204 (CFRSKISPIPQRIVHGTTIE) lie on the Mitochondrial matrix side of the membrane. The chain crosses the membrane as a helical span at residues 205–225 (ILWTILPSIILMFIAIPSFTL). Residues 226-376 (LYSMDDVVVD…YGSWVSNQIQ (151 aa)) lie on the Mitochondrial intermembrane side of the membrane. Cu cation contacts are provided by His309, Cys344, Glu346, Cys348, His352, and Met355. Position 346 (Glu346) interacts with Mg(2+).

The protein belongs to the cytochrome c oxidase subunit 2 family. Component of the cytochrome c oxidase (complex IV, CIV), a multisubunit enzyme composed of a catalytic core of 3 subunits and several supernumerary subunits. The complex exists as a monomer or a dimer and forms supercomplexes (SCs) in the inner mitochondrial membrane with ubiquinol-cytochrome c oxidoreductase (cytochrome b-c1 complex, complex III, CIII). Cu cation serves as cofactor.

The protein localises to the mitochondrion inner membrane. The catalysed reaction is 4 Fe(II)-[cytochrome c] + O2 + 8 H(+)(in) = 4 Fe(III)-[cytochrome c] + 2 H2O + 4 H(+)(out). Component of the cytochrome c oxidase, the last enzyme in the mitochondrial electron transport chain which drives oxidative phosphorylation. The respiratory chain contains 3 multisubunit complexes succinate dehydrogenase (complex II, CII), ubiquinol-cytochrome c oxidoreductase (cytochrome b-c1 complex, complex III, CIII) and cytochrome c oxidase (complex IV, CIV), that cooperate to transfer electrons derived from NADH and succinate to molecular oxygen, creating an electrochemical gradient over the inner membrane that drives transmembrane transport and the ATP synthase. Cytochrome c oxidase is the component of the respiratory chain that catalyzes the reduction of oxygen to water. Electrons originating from reduced cytochrome c in the intermembrane space (IMS) are transferred via the dinuclear copper A center (CU(A)) of subunit 2 and heme A of subunit 1 to the active site in subunit 1, a binuclear center (BNC) formed by heme A3 and copper B (CU(B)). The BNC reduces molecular oxygen to 2 water molecules using 4 electrons from cytochrome c in the IMS and 4 protons from the mitochondrial matrix. In Vigna unguiculata (Cowpea), this protein is Cytochrome c oxidase subunit 2, mitochondrial (COX2).